A 371-amino-acid chain; its full sequence is Ligninase LG5 (371 aa).

A signal peptide spans 1–21; it reads MAFKKLLAVLTAALSLRAAQG. Residues 22–27 constitute a propeptide that is removed on maturation; sequence AAVEKR. Disulfide bonds link Cys-30–Cys-42, Cys-41–Cys-311, Cys-61–Cys-146, and Cys-275–Cys-344. The Proton acceptor role is filled by His-74. Residues Asp-75, Gly-92, Asp-94, and Ser-96 each coordinate Ca(2+). Heme b is bound at residue His-202. Ca(2+)-binding residues include Ser-203, Asp-220, Thr-222, Ile-225, and Asp-227. Asn-283 carries an N-linked (GlcNAc...) asparagine glycan. Residues 349 to 371 are disordered; that stretch reads FPTLSTLPGPATSVARIPPPPGA.

It belongs to the peroxidase family. Ligninase subfamily. Requires Ca(2+) as cofactor. The cofactor is heme b.

It carries out the reaction 1-(3,4-dimethoxyphenyl)-2-(2-methoxyphenoxy)propane-1,3-diol + H2O2 = 3,4-dimethoxybenzaldehyde + guaiacol + glycolaldehyde + H2O. It catalyses the reaction 2 (3,4-dimethoxyphenyl)methanol + H2O2 = 2 (3,4-dimethoxyphenyl)methanol radical + 2 H2O. Its pathway is secondary metabolite metabolism; lignin degradation. In terms of biological role, depolymerization of lignin. Catalyzes the C(alpha)-C(beta) cleavage of the propyl side chains of lignin. In Phanerodontia chrysosporium (White-rot fungus), this protein is Ligninase LG5 (GLG5).